Consider the following 362-residue polypeptide: 3-dehydroquinate synthase (362 aa).

Residues 70–75 (DGEKYK), 104–108 (GVIGD), 128–129 (TT), Lys141, and Lys150 contribute to the NAD(+) site. The Zn(2+) site is built by Glu183, His246, and His263.

Belongs to the sugar phosphate cyclases superfamily. Dehydroquinate synthase family. It depends on Co(2+) as a cofactor. Requires Zn(2+) as cofactor. The cofactor is NAD(+).

It is found in the cytoplasm. The catalysed reaction is 7-phospho-2-dehydro-3-deoxy-D-arabino-heptonate = 3-dehydroquinate + phosphate. The protein operates within metabolic intermediate biosynthesis; chorismate biosynthesis; chorismate from D-erythrose 4-phosphate and phosphoenolpyruvate: step 2/7. Its function is as follows. Catalyzes the conversion of 3-deoxy-D-arabino-heptulosonate 7-phosphate (DAHP) to dehydroquinate (DHQ). This chain is 3-dehydroquinate synthase, found in Acinetobacter baylyi (strain ATCC 33305 / BD413 / ADP1).